The sequence spans 168 residues: DAZ-associated protein 2 (168 aa).

Residues 1–13 show a composition bias toward low complexity; the sequence is MNSKGQYPTQPTY. The disordered stretch occupies residues 1 to 25; it reads MNSKGQYPTQPTYPVQPPGNPVYPQ. Residues 39–42 carry the PPAY motif; it reads PPAY. A Phosphoserine modification is found at Ser77.

In terms of assembly, interacts with SOX6. Interacts with DAZ1 and DAZL. Interacts with IL17RB. May interact with FAM168B. Interacts with INCA1. Interacts with EIF4G1 and EIF4G2. Interacts (via PPAY motif) with NEDD4 (via WW domains). Interacts with transcription factor TCF4; the interaction results in localization of DAZAP2 to the nucleus. Interacts with transcription factors TCF7 and TCF7L1. Interacts with transcription factor LEF1. Interacts with serine/threonine-protein kinase HIPK2; the interaction results in phosphorylation of DAZAP2 which causes localization of DAZAP2 to the nucleus, reduces interaction of DAZAP2 with HIPK2 and prevents DAZAP2-dependent degradation of HIPK2. Interacts with ubiquitin ligase SIAH1; the interaction is decreased following phosphorylation of DAZAP2 by HIPK2. Interacts with TP53; the interaction is triggered by DNA damage. Ubiquitinated by SMURF2, leading to proteasomal degradation. Ubiquitinated by NEDD4, leading to proteasomal degradation. In terms of processing, following DNA damage, phosphorylated by HIPK2 which promotes DAZAP2 localization to the nucleus, reduces interaction of DAZAP2 with HIPK2 and SIAH1, and prevents DAZAP2-dependent ubiquitination of HIPK2 by E3 ubiquitin-protein ligase SIAH1 and subsequent HIPK2 proteasomal degradation.

The protein localises to the cytoplasm. Its subcellular location is the nucleus. It localises to the nucleus speckle. It is found in the nuclear body. The protein resides in the stress granule. Its function is as follows. In unstressed cells, promotes SIAH1-mediated polyubiquitination and degradation of the serine/threonine-protein kinase HIPK2, probably by acting as a loading factor that potentiates complex formation between HIPK2 and ubiquitin ligase SIAH1. In response to DNA damage, localizes to the nucleus following phosphorylation by HIPK2 and modulates the expression of a subset of TP53/p53 target genes by binding to TP53 at target gene promoters. This limits the expression of a number of cell death-mediating TP53 target genes, reducing DNA damage-induced cell death. Enhances the binding of transcription factor TCF7L2/TCF4, a Wnt signaling pathway effector, to the promoters of target genes. Plays a role in stress granule formation. In Bos taurus (Bovine), this protein is DAZ-associated protein 2.